A 348-amino-acid chain; its full sequence is VIP36-like protein (348 aa).

Residues Met1–Gly38 form the signal peptide. The Lumenal portion of the chain corresponds to Pro39–Ala313. The L-type lectin-like domain occupies Glu49–Leu274. Ser93 and Asp128 together coordinate a carbohydrate. Residues Asp159, Tyr161, and Asn163 each coordinate Ca(2+). Residues Tyr161 and Asn163 each contribute to the a carbohydrate site. The N-linked (GlcNAc...) asparagine glycan is linked to Asn181. An a carbohydrate-binding site is contributed by His188. Ca(2+) is bound at residue Asp191. Cys200 and Cys237 form a disulfide bridge. Residue Gly258–Leu260 participates in a carbohydrate binding. Residues Leu314–Ile334 form a helical membrane-spanning segment. Over Leu335 to Tyr348 the chain is Cytoplasmic. The short motif at Arg344–Arg346 is the Endoplasmic reticulum retention signal element.

It is found in the endoplasmic reticulum membrane. The protein localises to the golgi apparatus membrane. Its function is as follows. May be involved in the regulation of export from the endoplasmic reticulum of a subset of glycoproteins. May function as a regulator of ERGIC-53. The sequence is that of VIP36-like protein (LMAN2L) from Bos taurus (Bovine).